The chain runs to 130 residues: Large ribosomal subunit protein bL19 (130 aa).

It belongs to the bacterial ribosomal protein bL19 family.

Functionally, this protein is located at the 30S-50S ribosomal subunit interface and may play a role in the structure and function of the aminoacyl-tRNA binding site. This chain is Large ribosomal subunit protein bL19, found in Methylorubrum populi (strain ATCC BAA-705 / NCIMB 13946 / BJ001) (Methylobacterium populi).